A 354-amino-acid polypeptide reads, in one-letter code: MASSKAFGWAAKDASGHLSPFHFTRRQNEADDVTLKILYCGVCHSDLHTVKNDWGFTTYPVVPGHEIAGIVTKVGSNVTKFKEGDRVGVGVIVDSCQECECCQQDLESYCPKPVFTYNSPYKGTRTQGGYSDFVVVHQRFVLQFPDNLPLDAGAPLLCAGITVYSPMKYYGMTEPGKHLGVAGLGGLGHVAIKFGKAFGLKVTVISSSPNKESEAIDVLGADSFLLSSDPEKMKAATGTMDYIIDTISAVHSLVSLLGLLKLNGKLVTVGLPSKPLQLPIFPLVAGRKLIGGSNFGGLKETQEMLDFCGKHNIAANIELIKMDEINTAIERLSKADVKYRFVIDVANSLSSSNM.

Residues C43, H65, C96, C99, C102, C110, and C158 each coordinate Zn(2+).

The protein belongs to the zinc-containing alcohol dehydrogenase family. It depends on Zn(2+) as a cofactor.

The catalysed reaction is D-mannitol + NAD(+) = D-mannose + NADH + H(+). Functionally, oxidizes mannitol to mannose. Provides the initial step by which translocated mannitol is committed to central metabolism and, by regulating mannitol pool size, is important in regulating salt tolerance at the cellular level. The chain is Probable mannitol dehydrogenase 1 (CAD1) from Stylosanthes humilis (Townsville stylo).